A 288-amino-acid chain; its full sequence is 33 kDa chaperonin (288 aa).

2 disulfides stabilise this stretch: Cys235-Cys237 and Cys268-Cys271.

Belongs to the HSP33 family. Post-translationally, under oxidizing conditions two disulfide bonds are formed involving the reactive cysteines. Under reducing conditions zinc is bound to the reactive cysteines and the protein is inactive.

It localises to the cytoplasm. Functionally, redox regulated molecular chaperone. Protects both thermally unfolding and oxidatively damaged proteins from irreversible aggregation. Plays an important role in the bacterial defense system toward oxidative stress. This is 33 kDa chaperonin from Streptococcus thermophilus (strain ATCC BAA-491 / LMD-9).